A 56-amino-acid polypeptide reads, in one-letter code: Large ribosomal subunit protein bL33 (56 aa).

Belongs to the bacterial ribosomal protein bL33 family.

The protein is Large ribosomal subunit protein bL33 of Histophilus somni (strain 129Pt) (Haemophilus somnus).